The following is a 372-amino-acid chain: Serine/threonine-protein kinase 17B (372 aa).

The Protein kinase domain maps to 33–293 (TLTPKELGRG…AESCLSHSWL (261 aa)). Residues 39–47 (LGRGKFAVV) and Lys-62 contribute to the ATP site. Catalysis depends on Asp-158, which acts as the Proton acceptor. The segment at 305–348 (EETSGSSQIQDLTLRSSEEKTSKSSCNGSCGAREDKENIPEDGS) is disordered. Over residues 307 to 319 (TSGSSQIQDLTLR) the composition is skewed to polar residues.

Belongs to the protein kinase superfamily. CAMK Ser/Thr protein kinase family. DAP kinase subfamily. Interacts with CHP1; the interaction induces CHP1 to translocate from the Golgi to the nucleus. Autophosphorylated.

Its subcellular location is the nucleus. The protein localises to the cell membrane. It is found in the endoplasmic reticulum-Golgi intermediate compartment. The enzyme catalyses L-seryl-[protein] + ATP = O-phospho-L-seryl-[protein] + ADP + H(+). It carries out the reaction L-threonyl-[protein] + ATP = O-phospho-L-threonyl-[protein] + ADP + H(+). In terms of biological role, acts as a positive regulator of apoptosis. Phosphorylates myosin light chains. The protein is Serine/threonine-protein kinase 17B (Stk17b) of Mus musculus (Mouse).